We begin with the raw amino-acid sequence, 450 residues long: Probable 1,4-beta-D-glucan cellobiohydrolase C (450 aa).

Positions 1–19 (MKHLASSIALTLLLPAVQA) are cleaved as a signal peptide. Positions 20 to 55 (QQTVWGQCGGQGWSGPTNCVAGAACSTLNPYYAQCI) constitute a CBM1 domain. Intrachain disulfides connect C27-C44 and C38-C54. Residues 59-90 (TATSTTLSTTTTTQTTTKPTTTGPTTSAPTVT) are thr-rich linker. The segment at 63-89 (TTLSTTTTTQTTTKPTTTGPTTSAPTV) is disordered. The catalytic stretch occupies residues 91 to 450 (ASGNPFSGYQ…QLLTNANPSF (360 aa)). D180 is a catalytic residue. Cystine bridges form between C181/C240 and C372/C419. D226 functions as the Proton donor in the catalytic mechanism. D405 functions as the Nucleophile in the catalytic mechanism. Residue N409 is glycosylated (N-linked (GlcNAc...) asparagine).

It belongs to the glycosyl hydrolase 6 (cellulase B) family.

The protein localises to the secreted. The enzyme catalyses Hydrolysis of (1-&gt;4)-beta-D-glucosidic linkages in cellulose and cellotetraose, releasing cellobiose from the non-reducing ends of the chains.. Its function is as follows. The biological conversion of cellulose to glucose generally requires three types of hydrolytic enzymes: (1) Endoglucanases which cut internal beta-1,4-glucosidic bonds; (2) Exocellobiohydrolases that cut the disaccharide cellobiose from the non-reducing end of the cellulose polymer chain; (3) Beta-1,4-glucosidases which hydrolyze the cellobiose and other short cello-oligosaccharides to glucose. This chain is Probable 1,4-beta-D-glucan cellobiohydrolase C (cbhC), found in Neosartorya fischeri (strain ATCC 1020 / DSM 3700 / CBS 544.65 / FGSC A1164 / JCM 1740 / NRRL 181 / WB 181) (Aspergillus fischerianus).